Here is an 875-residue protein sequence, read N- to C-terminus: Probable inorganic carbon transporter subunit DabA (875 aa).

Residues Cys399, Asp401, His581, and Cys596 each coordinate Zn(2+).

This sequence belongs to the inorganic carbon transporter (TC 9.A.2) DabA family. In terms of assembly, forms a complex with DabB. The cofactor is Zn(2+).

Its subcellular location is the cell membrane. Functionally, part of an energy-coupled inorganic carbon pump. This is Probable inorganic carbon transporter subunit DabA from Bacillus thuringiensis (strain Al Hakam).